The sequence spans 202 residues: MSLYPKAMDELIKNLSNLPTIGRKSARRLAYRIIDMDPKKVDELVESIVNVKTNIRPCANCGNLTDKKLCDICSDQKRDNSVITVVEDSMNVISIEKTGEYNGKYHVLGGLLSPRDNIAPQDLNLENLFLRCKKDYVKEVILALSPTTNGDLTTNFIIEVLKNEEYNVKVSRIAMGVPLGANLEYYDEMSLYKAILDRREIK.

The C4-type zinc-finger motif lies at 58–73; the sequence is CANCGNLTDKKLCDIC. A Toprim domain is found at 81-178; it reads SVITVVEDSM…KVSRIAMGVP (98 aa).

The protein belongs to the RecR family.

Functionally, may play a role in DNA repair. It seems to be involved in an RecBC-independent recombinational process of DNA repair. It may act with RecF and RecO. The sequence is that of Recombination protein RecR from Finegoldia magna (strain ATCC 29328 / DSM 20472 / WAL 2508) (Peptostreptococcus magnus).